A 74-amino-acid chain; its full sequence is UPF0291 protein lmo0496 (74 aa).

The protein belongs to the UPF0291 family.

It localises to the cytoplasm. This is UPF0291 protein lmo0496 from Listeria monocytogenes serovar 1/2a (strain ATCC BAA-679 / EGD-e).